A 469-amino-acid polypeptide reads, in one-letter code: MTKNKKPTHFDAIIIGSGPGGEGAAMGLTKAGLNVAVIERENSVGGGCTHWGTIPSKALRHAVSRIIEYNQNPLYCKNNSSLHSTFSQILGHAQDVVNKQTRMRQGFYDRNKCSLIFGEASFIDAHTVRVKNADNSTDLYSADKFVIATGSRPYHPEGVDFDHSRVYDSDSILQLEHDPRHIIIYGAGVIGSEYASIFRGLGVKVDLINTRHRLLEFLDNEISDSLSYHLWNSGAMIRNGETFEKIEGTDDSIILHLESGKKMRADCLLYANGRTGNTDKLNLNKVGLTPDSRGQLAVNQNYCTDVDHVYAVGDVIGYPSLASAAYDQGRFVAQAITTGEAQGSLIDHIPTGIYTIPEISSVGKTEQQLTADKVPYEVGRSQFKHLARAQIAGTEVGSLKILFHRETKEILGIHCFGERAAEIIHIGQAIMEQKGDGNTIDYFVNTTFNYPTMAEAYRVAALNGLNRLF.

39–48 (ERENSVGGGC) contacts FAD.

The protein belongs to the class-I pyridine nucleotide-disulfide oxidoreductase family. Requires FAD as cofactor.

Its subcellular location is the cytoplasm. It catalyses the reaction NAD(+) + NADPH = NADH + NADP(+). Functionally, conversion of NADPH, generated by peripheral catabolic pathways, to NADH, which can enter the respiratory chain for energy generation. In Photobacterium profundum (strain SS9), this protein is Soluble pyridine nucleotide transhydrogenase.